A 119-amino-acid polypeptide reads, in one-letter code: Dolichyl-diphosphooligosaccharide--protein glycosyltransferase subunit DAD1 (119 aa).

Residues Met1–Asp35 are Cytoplasmic-facing. A helical transmembrane segment spans residues Leu36–Gly56. Residues Ser57–Pro59 lie on the Lumenal side of the membrane. A helical transmembrane segment spans residues Phe60–Leu80. Over Arg81 to Arg98 the chain is Cytoplasmic. A helical transmembrane segment spans residues Ala99–Gly119.

The protein belongs to the DAD/OST2 family. In terms of assembly, component of the oligosaccharyltransferase (OST) complex.

It is found in the endoplasmic reticulum membrane. Its pathway is protein modification; protein glycosylation. Functionally, subunit of the oligosaccharyl transferase (OST) complex that catalyzes the initial transfer of a defined glycan (Glc(3)Man(9)GlcNAc(2) in eukaryotes) from the lipid carrier dolichol-pyrophosphate to an asparagine residue within an Asn-X-Ser/Thr consensus motif in nascent polypeptide chains, the first step in protein N-glycosylation. N-glycosylation occurs cotranslationally and the complex associates with the Sec61 complex at the channel-forming translocon complex that mediates protein translocation across the endoplasmic reticulum (ER). All subunits are required for a maximal enzyme activity. The chain is Dolichyl-diphosphooligosaccharide--protein glycosyltransferase subunit DAD1 (DAD1) from Malus domestica (Apple).